The primary structure comprises 219 residues: MKSFVVAPFIVAIDGPAASGKGTLARRIATHYGMPHLDTGLTYRAVAKALLDKGLSLDDEALATDAALSLDLLAMDKAVLSAHAIGEAASKVAVMPAVRRALVEAQRHFANALPSSVLDGRDIGTVVCPDAAIKLFVTASPEVRARRRFDEVLARGDTADFAEILADLKKRDERDMNRTDSPLRPAEDAHLLDTSEMSIEAAFLAAKKLIDHALAQHRG.

Residue 15–23 coordinates ATP; that stretch reads GPAASGKGT.

The protein belongs to the cytidylate kinase family. Type 1 subfamily.

The protein localises to the cytoplasm. The enzyme catalyses CMP + ATP = CDP + ADP. The catalysed reaction is dCMP + ATP = dCDP + ADP. The chain is Cytidylate kinase from Brucella suis biovar 1 (strain 1330).